An 850-amino-acid chain; its full sequence is Protein STB2 (850 aa).

Ser594 and Ser625 each carry phosphoserine.

It to yeast STB6. Interacts with SIN3.

The sequence is that of Protein STB2 (STB2) from Saccharomyces cerevisiae (strain ATCC 204508 / S288c) (Baker's yeast).